We begin with the raw amino-acid sequence, 325 residues long: Heat-inducible transcription repressor HrcA (325 aa).

This sequence belongs to the HrcA family.

Functionally, negative regulator of class I heat shock genes (grpE-dnaK-dnaJ and groELS operons). Prevents heat-shock induction of these operons. The chain is Heat-inducible transcription repressor HrcA from Staphylococcus aureus (strain USA300).